The following is a 284-amino-acid chain: Serine protease 57 (284 aa).

A signal peptide spans 1 to 35 (MPSSTAMVPGTRGGWHCLVLTTAAALTQLMWLPGC). The region spanning 40–269 (IVGGHEVTPH…FVTWIWDVVR (230 aa)) is the Peptidase S1 domain. C65 and C81 form a disulfide bridge. Residues H80 and D128 each act as charge relay system in the active site. N-linked (GlcNAc...) asparagine glycosylation is present at N135. 3 cysteine pairs are disulfide-bonded: C163–C230, C194–C208, and C220–C245. S224 acts as the Charge relay system in catalysis.

It belongs to the peptidase S1 family. In terms of processing, after cleavage of the signal peptide, the N-terminus is probably further processed by CTSC. Processing by CTSC is probably required for accumulation in cytoplasmic granules; in the absence of CTSC the protein does not accumulate. Post-translationally, N-glycosylated.

It localises to the cytoplasmic granule lumen. It is found in the secreted. Serine protease that cleaves preferentially after Arg residues. Can also cleave after citrulline (deimidated arginine) and methylarginine residues. This chain is Serine protease 57 (Prss57), found in Mus musculus (Mouse).